Here is a 546-residue protein sequence, read N- to C-terminus: 2-isopropylmalate synthase (546 aa).

The Pyruvate carboxyltransferase domain maps to 8–271 (ILIFDTTLRD…NSFFKRNPDS (264 aa)). The Mn(2+) site is built by Asp17, His208, His210, and Asn244. Residues 408–546 (QLSLVQVSCG…TNTFLSNNAN (139 aa)) are regulatory domain.

This sequence belongs to the alpha-IPM synthase/homocitrate synthase family. LeuA type 1 subfamily. As to quaternary structure, homodimer. It depends on Mn(2+) as a cofactor.

The protein resides in the cytoplasm. It carries out the reaction 3-methyl-2-oxobutanoate + acetyl-CoA + H2O = (2S)-2-isopropylmalate + CoA + H(+). The protein operates within amino-acid biosynthesis; L-leucine biosynthesis; L-leucine from 3-methyl-2-oxobutanoate: step 1/4. In terms of biological role, catalyzes the condensation of the acetyl group of acetyl-CoA with 3-methyl-2-oxobutanoate (2-ketoisovalerate) to form 3-carboxy-3-hydroxy-4-methylpentanoate (2-isopropylmalate). The protein is 2-isopropylmalate synthase of Prochlorococcus marinus (strain AS9601).